Reading from the N-terminus, the 269-residue chain is GTP cyclohydrolase FolE2 (269 aa).

This sequence belongs to the GTP cyclohydrolase IV family.

The enzyme catalyses GTP + H2O = 7,8-dihydroneopterin 3'-triphosphate + formate + H(+). The protein operates within cofactor biosynthesis; 7,8-dihydroneopterin triphosphate biosynthesis; 7,8-dihydroneopterin triphosphate from GTP: step 1/1. Functionally, converts GTP to 7,8-dihydroneopterin triphosphate. This Burkholderia vietnamiensis (strain G4 / LMG 22486) (Burkholderia cepacia (strain R1808)) protein is GTP cyclohydrolase FolE2.